Here is a 466-residue protein sequence, read N- to C-terminus: MAKTLYEKLFDAHVVYEAENETPLLYIDRHLVHEVTSPQAFDGLRAHGRPVRQPGKTFATMDHNVSTQTKDINACGEMARIQMQELIKNCKEFGVELYDLNHPYQGIVHVMGPEQGVTLPGMTIVCGDSHTATHGAFGALAFGIGTSEVEHVLATQTLKQGRAKTMKIEVQGKAAPGITAKDIVLAIIGKTGSAGGTGHVVEFCGEAIRDLSMEGRMTLCNMAIEMGAKAGLVAPDETTFNYVKGRLHAPKGKDFDDAVAYWKTLQTDEGATFDTVVTLQAEEISPQVTWGTNPGQVISVNDNIPDPASFADPVERASAEKALAYMGLKPGIPLTEVAIDKVFIGSCTNSRIEDLRAAAEIAKGRKVAPGVQALVVPGSGPVKAQAEAEGLDKIFIEAGFEWRLPGCSMCLAMNNDRLNPGERCASTSNRNFEGRQGRGGRTHLVSPAMAAAAAVTGHFADIRNIK.

The [4Fe-4S] cluster site is built by Cys-347, Cys-407, and Cys-410.

Belongs to the aconitase/IPM isomerase family. LeuC type 1 subfamily. In terms of assembly, heterodimer of LeuC and LeuD. [4Fe-4S] cluster serves as cofactor.

The catalysed reaction is (2R,3S)-3-isopropylmalate = (2S)-2-isopropylmalate. The protein operates within amino-acid biosynthesis; L-leucine biosynthesis; L-leucine from 3-methyl-2-oxobutanoate: step 2/4. Its function is as follows. Catalyzes the isomerization between 2-isopropylmalate and 3-isopropylmalate, via the formation of 2-isopropylmaleate. This is 3-isopropylmalate dehydratase large subunit from Escherichia coli O45:K1 (strain S88 / ExPEC).